A 542-amino-acid chain; its full sequence is MTKAPATKKLQRVPSKAIWLFSGSDQLTQASDKTVKSTKSMDKEIVNLKKDLIRSRFLIQCVKIGRGYFTMLQEETAFKKHQQHLKKLQEEELNKFQPAKKYSDIQCRDTLLTTYEYEKMKKLEAGIIIRPFTPIHNCIMAPSLPESHVDPLFRQLCALHWLLEALTIDHTHHTMRPVIACWNPKDPGGSKSTIKKINKDKSMGQRWDHFVTAPKTKKFKAPAIRSLATRKPSRRGSALSLTRTSGGSSPQSSMMSVNPSSDEPTGSKDIEDNESSSTKPEEEVLHFSLQKLLEMVREDARRTILMETEMQKKAPSILSLVKQVKSDYGWKDWQTTHKSSERSSTTSGESHIQVTQKKSKGRANRDIIYCKTGICNTMRAKFYSVAQEAGFCLQDKMEILKKRQEERGLQKFHSFIVTSNFQKDIAKMRHQVSMVKGDAEEMADHWYFDLLSKLPEDLKSFRPAKKILTKLQKFGENLDLRIRPHVLLKVLQDLRIWELCSPDIAVAIEFVREHIIHMPQEDYVNWLQSRVNMPIRHRPILT.

A coiled-coil region spans residues 70-97 (TMLQEETAFKKHQQHLKKLQEEELNKFQ). Disordered stretches follow at residues 228–284 (ATRK…EEEV) and 334–358 (QTTH…TQKK). Composition is skewed to low complexity over residues 245–261 (SGGS…NPSS) and 342–351 (RSSTTSGESH).

The polypeptide is Coiled-coil domain-containing protein 60 (Ccdc60) (Rattus norvegicus (Rat)).